A 136-amino-acid chain; its full sequence is uncharacterized protein (136 aa).

Disordered stretches follow at residues 23 to 44 (QESLKSRIEDKNGDVASPKEDN) and 56 to 95 (DGVITSEEGCSSSGEKENSGLCSEESSEEDPEEAEEESAR). A compositionally biased stretch (low complexity) spans 61–79 (SEEGCSSSGEKENSGLCSE). Over residues 80–91 (ESSEEDPEEAEE) the composition is skewed to acidic residues.

This is an uncharacterized protein from Saccharomyces cerevisiae (strain ATCC 204508 / S288c) (Baker's yeast).